We begin with the raw amino-acid sequence, 324 residues long: Beta-ketoacyl-[acyl-carrier-protein] synthase III (324 aa).

Active-site residues include cysteine 116 and histidine 251. The ACP-binding stretch occupies residues 252–256 (QANLR). The active site involves asparagine 281.

Belongs to the thiolase-like superfamily. FabH family. In terms of assembly, homodimer.

It localises to the cytoplasm. It catalyses the reaction malonyl-[ACP] + acetyl-CoA + H(+) = 3-oxobutanoyl-[ACP] + CO2 + CoA. It functions in the pathway lipid metabolism; fatty acid biosynthesis. In terms of biological role, catalyzes the condensation reaction of fatty acid synthesis by the addition to an acyl acceptor of two carbons from malonyl-ACP. Catalyzes the first condensation reaction which initiates fatty acid synthesis and may therefore play a role in governing the total rate of fatty acid production. Possesses both acetoacetyl-ACP synthase and acetyl transacylase activities. Its substrate specificity determines the biosynthesis of branched-chain and/or straight-chain of fatty acids. The protein is Beta-ketoacyl-[acyl-carrier-protein] synthase III of Xylella fastidiosa (strain Temecula1 / ATCC 700964).